The sequence spans 104 residues: uncharacterized protein (104 aa).

This is an uncharacterized protein from Mycobacterium tuberculosis (strain CDC 1551 / Oshkosh).